The sequence spans 39 residues: MKVRPSVKPMCDQCRVIKRNGRVMVICSANPKHKQRQGK.

This sequence belongs to the bacterial ribosomal protein bL36 family.

The protein is Large ribosomal subunit protein bL36 of Oenococcus oeni (strain ATCC BAA-331 / PSU-1).